Reading from the N-terminus, the 706-residue chain is Double-strand break repair protein MRE11 (706 aa).

Ser-2 is subject to N-acetylserine. Ser-2 carries the post-translational modification Phosphoserine. The Mn(2+) site is built by Asp-20, His-22, and Asp-60. The tract at residues 87-117 (RPVQFEVISDQSVNFGFSKFPWVNYQDGNLN) is interaction with NBN. Asn-128 provides a ligand contact to Mn(2+). His-129 acts as the Proton donor in catalysis. His-217, His-245, and His-247 together coordinate Mn(2+). A Glycyl lysine isopeptide (Lys-Gly) (interchain with G-Cter in SUMO2) cross-link involves residue Lys-255. Phosphoserine is present on Ser-275. Residue Lys-282 forms a Glycyl lysine isopeptide (Lys-Gly) (interchain with G-Cter in UFM1) linkage. Lys-339 is covalently cross-linked (Glycyl lysine isopeptide (Lys-Gly) (interchain with G-Cter in ubiquitin)). Glycyl lysine isopeptide (Lys-Gly) (interchain with G-Cter in SUMO) cross-links involve residues Lys-384 and Lys-468. Lys-481 participates in a covalent cross-link: Glycyl lysine isopeptide (Lys-Gly) (interchain with G-Cter in ubiquitin). Residues 505–514 (FRESRQRNTN) are compositionally biased toward basic and acidic residues. The disordered stretch occupies residues 505–706 (FRESRQRNTN…SSSCPRRNRR (202 aa)). Residues 531–541 (RSQSETSTSAF) show a composition bias toward polar residues. Over residues 569–579 (GRGRGRGRRGA) the composition is skewed to basic residues. 9 positions are modified to asymmetric dimethylarginine: Arg-570, Arg-572, Arg-574, Arg-576, Arg-577, Arg-580, Arg-587, Arg-592, and Arg-594. Residues 570–594 (RGRGRGRRGARGQSSAPRGGSQRGR) carry the GAR motif. Residues 580 to 589 (RGQSSAPRGG) are compositionally biased toward low complexity. Polar residues predominate over residues 603 to 617 (RGRSSKATSSTSRNM). Phosphoserine is present on residues Ser-618, Ser-640, and Ser-648. Residues 643-653 (IEVDDSDEDDI) show a composition bias toward acidic residues. A compositionally biased stretch (polar residues) spans 655–679 (PTNSRADQRWSGTTSSKRMSQSQTA). Position 671 is an N6-lactoyllysine (Lys-671). Phosphoserine occurs at positions 674, 676, 686, and 699. Residues 684-694 (FESDEDDDDDP) show a composition bias toward acidic residues.

Belongs to the MRE11/RAD32 family. Component of the MRN complex composed of two heterodimers RAD50 and MRE11 associated with a single NBN. The MRN complexes dimerize on DNA to form joined MRN-MRN oligomers required for DNA double-strand break repair. As part of the MRN complex, interacts with MCM9; the interaction recruits the complex to DNA repair sites. Component of the BASC complex, at least composed of BRCA1, MSH2, MSH6, MLH1, ATM, BLM, RAD50, MRE11 and NBN. Found in a complex with TERF2. Interacts with DCLRE1C/Artemis and DCLRE1B/Apollo. Interacts with ATF2. Interacts with EXD2. Interacts with MRNIP. Interacts with SAMHD1; leading to stimulate 3'-5' exonuclease activity. Interacts (when ubiquitinated) with UBQLN4 (via its UBA domain). Interacts with CYREN (via XLF motif). Interacts with GFI1; promoting methylation by PRMT1. Interacts with DYNLL1; inhibiting the activity of MRE11. Interacts with C1QBP and RAD50; interaction takes place in absence of DNA damage to form the MRC (MRE11-RAD50-C1QBP) complex that inhibits the activity of MRE11. Interacts with AGER/RAGE; AGER is recruited to DNA double-strand break sites where it enhances MRE11 endonuclease activity to promote DNA repair. Mn(2+) serves as cofactor. Post-translationally, phosphorylated by ATM at Ser-674 and Ser-676 in response to DNA damage, promoting MRE11 activity: phosphorylation activates MRE11 by preventing the interaction between MRE11 and the C1QBP inhibitor. Phosphorylation at Ser-648 by PLK1 primes for phosphorylation at Ser-686 by CK2, inhibiting recruitment of the MRN complex to DNA damage sites. In terms of processing, asymmetric dimethylation by PRMT1 promotes MRE11 exonuclease activity. Lactylation at Lys-671 by CREBBP/CBP in response to DNA damage promotes DNA binding and MRE11 activity. Post-translationally, acetylated on lysine residues by KAT2A /GCN5. In terms of processing, ubiquitinated following DNA damage. Ubiquitination triggers interaction with UBQLN4, leading to MRE11 removal from chromatin and degradation by the proteasome. Ubiquitinated at Lys-339 and Lys-481 by RNF126 via 'Lys-27'- and 'Lys-29'-linked polyubiquitin chains, promoting the exonuclease activity of MRE11. SUMOylated by PIAS1, stabilizing MRE11 on chromatin during end resection. DeSUMOylated by SENP3 following removal from DNA double-strand breaks (DSBs). Post-translationally, ufmylation at Lys-282 promotes MRE11 activity and is required for activation of the ATM and ATR kinases by the MRN complex.

It is found in the nucleus. The protein resides in the chromosome. The protein localises to the telomere. With respect to regulation, interaction with SAMHD1 stimulates the double-strand-specific 3'-5' exonuclease activity. RBBP8/CtIP specifically promotes the endonuclease activity to clear protein-DNA adducts and generate clean double-strand break ends. DYNLL1-binding inhibits the activity of MRE11. MRE11 activity is inhibited by C1QBP: in absence of DNA damage, C1QBP interacts with unphosphorylated MRE11, preventing formation and activity of the MRN complex. Core component of the MRN complex, which plays a central role in double-strand break (DSB) repair, DNA recombination, maintenance of telomere integrity and meiosis. The MRN complex is involved in the repair of DNA double-strand breaks (DSBs) via homologous recombination (HR), an error-free mechanism which primarily occurs during S and G2 phases. The complex (1) mediates the end resection of damaged DNA, which generates proper single-stranded DNA, a key initial steps in HR, and is (2) required for the recruitment of other repair factors and efficient activation of ATM and ATR upon DNA damage. Within the MRN complex, MRE11 possesses both single-strand endonuclease activity and double-strand-specific 3'-5' exonuclease activity. After DSBs, MRE11 is loaded onto DSBs sites and cleaves DNA by cooperating with RBBP8/CtIP to initiate end resection. MRE11 first endonucleolytically cleaves the 5' strand at DNA DSB ends to prevent non-homologous end joining (NHEJ) and licence HR. It then generates a single-stranded DNA gap via 3' to 5' exonucleolytic degradation to create entry sites for EXO1- and DNA2-mediated 5' to 3' long-range resection, which is required for single-strand invasion and recombination. RBBP8/CtIP specifically promotes the endonuclease activity of MRE11 to clear protein-DNA adducts and generate clean double-strand break ends. MRE11 endonuclease activity is also enhanced by AGER/RAGE. The MRN complex is also required for DNA damage signaling via activation of the ATM and ATR kinases: the nuclease activity of MRE11 is not required to activate ATM and ATR. The MRN complex is also required for the processing of R-loops. The MRN complex is involved in the activation of the cGAS-STING pathway induced by DNA damage during tumorigenesis: the MRN complex acts by displacing CGAS from nucleosome sequestration, thereby activating it. In telomeres the MRN complex may modulate t-loop formation. The chain is Double-strand break repair protein MRE11 from Mus musculus (Mouse).